The chain runs to 471 residues: ATP synthase subunit beta (471 aa).

ATP is bound at residue 156-163 (GGAGVGKT).

This sequence belongs to the ATPase alpha/beta chains family. As to quaternary structure, F-type ATPases have 2 components, CF(1) - the catalytic core - and CF(0) - the membrane proton channel. CF(1) has five subunits: alpha(3), beta(3), gamma(1), delta(1), epsilon(1). CF(0) has three main subunits: a(1), b(2) and c(9-12). The alpha and beta chains form an alternating ring which encloses part of the gamma chain. CF(1) is attached to CF(0) by a central stalk formed by the gamma and epsilon chains, while a peripheral stalk is formed by the delta and b chains.

Its subcellular location is the cell membrane. The catalysed reaction is ATP + H2O + 4 H(+)(in) = ADP + phosphate + 5 H(+)(out). Its function is as follows. Produces ATP from ADP in the presence of a proton gradient across the membrane. The catalytic sites are hosted primarily by the beta subunits. The polypeptide is ATP synthase subunit beta (Macrococcus caseolyticus (strain JCSC5402) (Macrococcoides caseolyticum)).